Here is a 373-residue protein sequence, read N- to C-terminus: NADPH-dependent 3-keto-steroid reductase Hsd3b5 (373 aa).

NADP(+) is bound by residues 10 to 15 (GAGGFL), Tyr155, and Lys159. Lys159 functions as the Proton donor in the catalytic mechanism. Residues 288–308 (LSLLYWLAFLLETVSFLLRPV) traverse the membrane as a helical segment. Position 350 is an N6-acetyllysine (Lys350).

The protein belongs to the 3-beta-HSD family. As to expression, expressed in the male liver, starting in late puberty.

It localises to the endoplasmic reticulum membrane. It is found in the mitochondrion membrane. It carries out the reaction a 3beta-hydroxysteroid + NADP(+) = a 3-oxosteroid + NADPH + H(+). The enzyme catalyses 5alpha-androstane-3beta,17beta-diol + NADP(+) = 17beta-hydroxy-5alpha-androstan-3-one + NADPH + H(+). The protein operates within steroid metabolism. Functionally, responsible for the reduction of the oxo group on the C-3 of 5alpha-androstane steroids. Catalyzes the conversion of dihydrotestosterone to its inactive form 5alpha-androstanediol, that does not bind androgen receptor/AR. Does not function as an isomerase. The chain is NADPH-dependent 3-keto-steroid reductase Hsd3b5 from Mus musculus (Mouse).